A 328-amino-acid polypeptide reads, in one-letter code: Ribosomal RNA small subunit methyltransferase H (328 aa).

S-adenosyl-L-methionine is bound by residues 35 to 37, Asp-60, Phe-87, Asp-113, and Gln-120; that span reads GSH.

Belongs to the methyltransferase superfamily. RsmH family.

It localises to the cytoplasm. It carries out the reaction cytidine(1402) in 16S rRNA + S-adenosyl-L-methionine = N(4)-methylcytidine(1402) in 16S rRNA + S-adenosyl-L-homocysteine + H(+). Functionally, specifically methylates the N4 position of cytidine in position 1402 (C1402) of 16S rRNA. This is Ribosomal RNA small subunit methyltransferase H from Chlorobium chlorochromatii (strain CaD3).